The sequence spans 653 residues: Polyadenylate-binding protein, cytoplasmic and nuclear (653 aa).

The segment covering 1–10 (MPSTDLKKQA) has biased composition (basic and acidic residues). Positions 1-77 (MPSTDLKKQA…SVATPSGTAP (77 aa)) are disordered. Polar residues predominate over residues 17 to 27 (DVNTNNEAVES). Positions 53 to 68 (AAEPSESTSTPTNASS) are enriched in low complexity. The region spanning 80–158 (ASLYVGELDP…RPCRIMWSQR (79 aa)) is the RRM 1 domain. Residue Thr167 is modified to Phosphothreonine. 3 consecutive RRM domains span residues 168–245 (GNVF…HHVS), 261–338 (TNVY…RAQK), and 364–441 (VNLF…LAQR). Residues 569–646 (PERFTAADLA…AIGVLQEFVD (78 aa)) form the PABC domain.

It belongs to the polyadenylate-binding protein type-1 family. Interacts with cid13.

It localises to the cytoplasm. Its subcellular location is the nucleus. Its function is as follows. Binds the poly(A) tail of mRNA. Appears to be an important mediator of the multiple roles of the poly(A) tail in mRNA biogenesis, stability and translation. In the nucleus, involved in both mRNA cleavage and polyadenylation. Is also required for efficient mRNA export to the cytoplasm. Acts in concert with a poly(A)-specific nuclease (PAN) to affect poly(A) tail shortening, which may occur concomitantly with either nucleocytoplasmic mRNA transport or translational initiation. In the cytoplasm, stimulates translation initiation and regulates mRNA decay through translation termination-coupled poly(A) shortening, probably mediated by PAN. This chain is Polyadenylate-binding protein, cytoplasmic and nuclear (pab1), found in Schizosaccharomyces pombe (strain 972 / ATCC 24843) (Fission yeast).